A 289-amino-acid chain; its full sequence is Diaminopimelate epimerase (289 aa).

3 residues coordinate substrate: Asn13, Gln47, and Asn67. The Proton donor role is filled by Cys76. Residues 77 to 78 (GN), Asn167, Asn200, and 218 to 219 (ER) contribute to the substrate site. Cys227 serves as the catalytic Proton acceptor. A substrate-binding site is contributed by 228–229 (GT).

It belongs to the diaminopimelate epimerase family. Homodimer.

Its subcellular location is the cytoplasm. It carries out the reaction (2S,6S)-2,6-diaminopimelate = meso-2,6-diaminopimelate. The protein operates within amino-acid biosynthesis; L-lysine biosynthesis via DAP pathway; DL-2,6-diaminopimelate from LL-2,6-diaminopimelate: step 1/1. Its function is as follows. Catalyzes the stereoinversion of LL-2,6-diaminopimelate (L,L-DAP) to meso-diaminopimelate (meso-DAP), a precursor of L-lysine and an essential component of the bacterial peptidoglycan. The chain is Diaminopimelate epimerase from Burkholderia vietnamiensis (strain G4 / LMG 22486) (Burkholderia cepacia (strain R1808)).